The following is a 170-amino-acid chain: Cathelicidin antimicrobial peptide (170 aa).

The first 30 residues, Met-1–Ala-30, serve as a signal peptide directing secretion. Positions Gln-31–Arg-131 are cleaved as a propeptide — cathelin-like domain (CLD). 2 disulfide bridges follow: Cys-86-Cys-97 and Cys-108-Cys-125. The tract at residues Leu-150–Gly-162 is active core.

This sequence belongs to the cathelicidin family. As to quaternary structure, monomer, homodimer or homotrimer (in vitro). Oligomerizes as tetra- or hexamer in solution (in vitro). Post-translationally, proteolytically cleaved by proteinase PRTN3 into antibacterial peptide LL-37. Proteolytically cleaved by cathepsin CTSG and neutrophil elastase ELANE. Resistant to proteolytic degradation in solution, and when bound to both zwitterionic (mimicking mammalian membranes) and negatively charged membranes (mimicking bacterial membranes). In terms of processing, after secretion onto the skin surface, the CAMP gene product is processed by a serine protease-dependent mechanism into multiple novel antimicrobial peptides distinct from and shorter than cathelicidin LL-37. These peptides show enhanced antimicrobial action, acquiring the ability to kill skin pathogens such as S.aureus, E.coli and C.albicans. These peptides have lost the ability to stimulate CXCL8/IL8 release from keratinocytes. The peptides act synergistically, killing bacteria at lower concentrations when present together, and maintain activity at increased salt condition.

It localises to the secreted. The protein resides in the vesicle. Antimicrobial protein that is an integral component of the innate immune system. Binds to bacterial lipopolysaccharides (LPS). Acts via neutrophil N-formyl peptide receptors to enhance the release of CXCL2. Postsecretory processing generates multiple cathelicidin antimicrobial peptides with various lengths which act as a topical antimicrobial defense in sweat on skin. The unprocessed precursor form, cathelicidin antimicrobial peptide, inhibits the growth of Gram-negative E.coli and E.aerogenes with efficiencies comparable to that of the mature peptide LL-37 (in vitro). Functionally, antimicrobial peptide that is an integral component of the innate immune system. Binds to bacterial lipopolysaccharides (LPS). Causes membrane permeabilization by forming transmembrane pores (in vitro). Causes lysis of E.coli. Exhibits antimicrobial activity against Gram-negative bacteria such as P.aeruginosa, S.typhimurium, E.aerogenes, E.coli and P.syringae, Gram-positive bacteria such as L.monocytogenes, S.epidermidis, S.pyogenes and S.aureus, as well as vancomycin-resistant enterococci (in vitro). Exhibits antimicrobial activity against methicillin-resistant S.aureus, P.mirabilis, and C.albicans in low-salt media, but not in media containing 100 mM NaCl (in vitro). Forms chiral supramolecular assemblies with quinolone signal (PQS) molecules of P.aeruginosa, which may lead to interference of bacterial quorum signaling and perturbance of bacterial biofilm formation. May form supramolecular fiber-like assemblies on bacterial membranes. Induces cytokine and chemokine producation as well as TNF/TNFA and CSF2/GMCSF production in normal human keratinocytes. Exhibits hemolytic activity against red blood cells. In terms of biological role, exhibits antimicrobial activity against E.coli and B.megaterium (in vitro). This is Cathelicidin antimicrobial peptide from Trachypithecus obscurus (Dusky leaf-monkey).